The chain runs to 232 residues: Orotate phosphoribosyltransferase (232 aa).

5-phospho-alpha-D-ribose 1-diphosphate is bound by residues R107, K108, K111, and 133–141; that span reads EDLTTDGGS. T137 is a binding site for orotate.

The protein belongs to the purine/pyrimidine phosphoribosyltransferase family. PyrE subfamily. As to quaternary structure, homodimer. It depends on Mg(2+) as a cofactor.

The enzyme catalyses orotidine 5'-phosphate + diphosphate = orotate + 5-phospho-alpha-D-ribose 1-diphosphate. The protein operates within pyrimidine metabolism; UMP biosynthesis via de novo pathway; UMP from orotate: step 1/2. Its function is as follows. Catalyzes the transfer of a ribosyl phosphate group from 5-phosphoribose 1-diphosphate to orotate, leading to the formation of orotidine monophosphate (OMP). This is Orotate phosphoribosyltransferase from Cereibacter sphaeroides (strain ATCC 17029 / ATH 2.4.9) (Rhodobacter sphaeroides).